We begin with the raw amino-acid sequence, 274 residues long: Kit ligand (274 aa).

Positions 1–25 (MKKTQTWIITCIYLQLLLFNPLVRT) are cleaved as a signal peptide. Topologically, residues 26–215 (KGICRNRVTD…ANPLGDSNLQ (190 aa)) are extracellular. 2 disulfides stabilise this stretch: Cys29–Cys114 and Cys68–Cys164. Asn90, Asn97, Asn145, and Asn196 each carry an N-linked (GlcNAc...) asparagine glycan. The helical transmembrane segment at 216-238 (WAAMALPAFFSLVIGFAFGALYW) threads the bilayer. The Cytoplasmic segment spans residues 239 to 274 (KKKQPNLTRTAENIQINEEDNEISMLQEKEREFQEV).

This sequence belongs to the SCF family. Homodimer, non-covalently linked. Heterotetramer with KIT, binding two KIT molecules; thereby mediates KIT dimerization and subsequent activation by autophosphorylation. A soluble form is produced by proteolytic processing of isoform 1 in the extracellular domain.

The protein resides in the cytoplasm. It is found in the cytoskeleton. The protein localises to the cell membrane. It localises to the cell projection. Its subcellular location is the lamellipodium. The protein resides in the filopodium. It is found in the secreted. Its function is as follows. Ligand for the receptor-type protein-tyrosine kinase KIT. Plays an essential role in the regulation of cell survival and proliferation, hematopoiesis, stem cell maintenance, gametogenesis, mast cell development, migration and function, and in melanogenesis. KITLG/SCF binding can activate several signaling pathways. Promotes phosphorylation of PIK3R1, the regulatory subunit of phosphatidylinositol 3-kinase, and subsequent activation of the kinase AKT1. KITLG/SCF and KIT also transmit signals via GRB2 and activation of RAS, RAF1 and the MAP kinases MAPK1/ERK2 and/or MAPK3/ERK1. KITLG/SCF and KIT promote activation of STAT family members STAT1, STAT3 and STAT5. KITLG/SCF and KIT promote activation of PLCG1, leading to the production of the cellular signaling molecules diacylglycerol and inositol 1,4,5-trisphosphate. KITLG/SCF acts synergistically with other cytokines, probably interleukins. The polypeptide is Kit ligand (KITLG) (Neovison vison (American mink)).